The primary structure comprises 72 residues: UPF0270 protein YheU (72 aa).

The protein belongs to the UPF0270 family.

The protein is UPF0270 protein YheU of Shigella dysenteriae serotype 1 (strain Sd197).